The sequence spans 36 residues: Photosystem I reaction center subunit VIII (36 aa).

The chain crosses the membrane as a helical span at residues 6-28 (LPSIFVPXVGLVFPAIAMASXFL).

The protein belongs to the PsaI family.

The protein localises to the plastid. It localises to the chloroplast thylakoid membrane. In terms of biological role, may help in the organization of the PsaL subunit. This chain is Photosystem I reaction center subunit VIII, found in Acorus gramineus (Dwarf sweet flag).